A 645-amino-acid chain; its full sequence is DNA mismatch repair protein MutL (645 aa).

Disordered stretches follow at residues Arg-353 to Gln-381 and Gln-395 to Gly-420.

The protein belongs to the DNA mismatch repair MutL/HexB family.

This protein is involved in the repair of mismatches in DNA. It is required for dam-dependent methyl-directed DNA mismatch repair. May act as a 'molecular matchmaker', a protein that promotes the formation of a stable complex between two or more DNA-binding proteins in an ATP-dependent manner without itself being part of a final effector complex. This is DNA mismatch repair protein MutL from Pseudomonas syringae pv. tomato (strain ATCC BAA-871 / DC3000).